Here is a 421-residue protein sequence, read N- to C-terminus: Imidazolonepropionase (421 aa).

The Fe(3+) site is built by His-81 and His-83. 2 residues coordinate Zn(2+): His-81 and His-83. 4-imidazolone-5-propanoate is bound by residues Arg-90, Tyr-153, and His-186. Tyr-153 contacts N-formimidoyl-L-glutamate. His-251 serves as a coordination point for Fe(3+). His-251 serves as a coordination point for Zn(2+). Position 254 (Glu-254) interacts with 4-imidazolone-5-propanoate. Fe(3+) is bound at residue Asp-326. Asp-326 contacts Zn(2+). N-formimidoyl-L-glutamate-binding residues include Asn-328 and Gly-330. Ser-331 lines the 4-imidazolone-5-propanoate pocket.

This sequence belongs to the metallo-dependent hydrolases superfamily. HutI family. Zn(2+) is required as a cofactor. It depends on Fe(3+) as a cofactor.

It is found in the cytoplasm. The enzyme catalyses 4-imidazolone-5-propanoate + H2O = N-formimidoyl-L-glutamate. Its pathway is amino-acid degradation; L-histidine degradation into L-glutamate; N-formimidoyl-L-glutamate from L-histidine: step 3/3. Its function is as follows. Catalyzes the hydrolytic cleavage of the carbon-nitrogen bond in imidazolone-5-propanoate to yield N-formimidoyl-L-glutamate. It is the third step in the universal histidine degradation pathway. This is Imidazolonepropionase from Streptococcus pyogenes serotype M6 (strain ATCC BAA-946 / MGAS10394).